The chain runs to 298 residues: Protoheme IX farnesyltransferase (298 aa).

9 consecutive transmembrane segments (helical) span residues 23–43 (LLLL…GKPY), 47–67 (LVVL…NMYF), 93–113 (VFIA…RIIN), 115–135 (HFAL…TYLL), 143–163 (IIAG…AAAG), 169–189 (ALLF…FLAT), 211–231 (IAVA…IVGL), 236–256 (VIGT…FHLA), and 278–298 (MMLG…YIIS).

Belongs to the UbiA prenyltransferase family. Protoheme IX farnesyltransferase subfamily.

The protein resides in the cell membrane. It carries out the reaction heme b + (2E,6E)-farnesyl diphosphate + H2O = Fe(II)-heme o + diphosphate. Its pathway is porphyrin-containing compound metabolism; heme O biosynthesis; heme O from protoheme: step 1/1. Functionally, converts heme B (protoheme IX) to heme O by substitution of the vinyl group on carbon 2 of heme B porphyrin ring with a hydroxyethyl farnesyl side group. This Hyperthermus butylicus (strain DSM 5456 / JCM 9403 / PLM1-5) protein is Protoheme IX farnesyltransferase.